The sequence spans 267 residues: Dolichol-phosphate mannosyltransferase (267 aa).

S2 carries the post-translational modification N-acetylserine. Topologically, residues 2–238 (SIEYSVIVPA…QQLKELYVFK (237 aa)) are cytoplasmic. Residues P10, Y12, E14, V42, D44, D95, A96, D97, Q99, and R122 each contribute to the GDP-alpha-D-mannose site. Mg(2+) contacts are provided by D97 and Q99. 2 residues coordinate Mn(2+): D97 and Q99. Position 141 is a phosphoserine; by PKA (S141). GDP-alpha-D-mannose-binding residues include K183, R212, and K218. The chain crosses the membrane as a helical; Anchor for type IV membrane protein span at residues 239 to 259 (FGANNLILFITFWSILFFYVC). Residues 260-267 (YQLYHLVF) lie on the Lumenal side of the membrane.

The protein belongs to the glycosyltransferase 2 family. Interacts with the C-terminus of SAC1, thereby sequestering it to the endoplasmic reticulum in exponentially growing cells. Under nutrient limitation conditions, this interaction is rapidly abolished. Mg(2+) is required as a cofactor. It depends on Mn(2+) as a cofactor. The cofactor is Ca(2+).

It localises to the endoplasmic reticulum membrane. The enzyme catalyses a di-trans,poly-cis-dolichyl phosphate + GDP-alpha-D-mannose = a di-trans,poly-cis-dolichyl beta-D-mannosyl phosphate + GDP. The protein operates within protein modification; protein glycosylation. With respect to regulation, inhibited by acetylsalicylic acid (aspirin). Its function is as follows. Transfers mannose from GDP-mannose to dolichol monophosphate to form dolichol phosphate mannose (Dol-P-Man) which is the mannosyl donor in pathways leading to N-glycosylation, glycosyl phosphatidylinositol membrane anchoring, and O-mannosylation of proteins. The polypeptide is Dolichol-phosphate mannosyltransferase (Saccharomyces cerevisiae (strain ATCC 204508 / S288c) (Baker's yeast)).